The chain runs to 247 residues: 5'-nucleotidase SurE (247 aa).

Residues D8, D9, S39, and N95 each coordinate a divalent metal cation.

It belongs to the SurE nucleotidase family. It depends on a divalent metal cation as a cofactor.

It localises to the cytoplasm. The catalysed reaction is a ribonucleoside 5'-phosphate + H2O = a ribonucleoside + phosphate. Functionally, nucleotidase that shows phosphatase activity on nucleoside 5'-monophosphates. The chain is 5'-nucleotidase SurE from Thermotoga petrophila (strain ATCC BAA-488 / DSM 13995 / JCM 10881 / RKU-1).